We begin with the raw amino-acid sequence, 248 residues long: Proteasome subunit alpha type-5 (248 aa).

It belongs to the peptidase T1A family. As to quaternary structure, the 26S proteasome consists of a 20S proteasome core and two 19S regulatory subunits. The 20S proteasome core is composed of 28 subunits that are arranged in four stacked rings, resulting in a barrel-shaped structure. The two end rings are each formed by seven alpha subunits, and the two central rings are each formed by seven beta subunits. The catalytic chamber with the active sites is on the inside of the barrel.

Its subcellular location is the cytoplasm. It localises to the nucleus. The proteasome is a multicatalytic proteinase complex which is characterized by its ability to cleave peptides with Arg, Phe, Tyr, Leu, and Glu adjacent to the leaving group at neutral or slightly basic pH. The proteasome has an ATP-dependent proteolytic activity. The protein is Proteasome subunit alpha type-5 (pas-5) of Caenorhabditis elegans.